The chain runs to 223 residues: Protein-L-isoaspartate O-methyltransferase (223 aa).

Residue Ser70 is part of the active site.

Belongs to the methyltransferase superfamily. L-isoaspartyl/D-aspartyl protein methyltransferase family.

It localises to the cytoplasm. It carries out the reaction [protein]-L-isoaspartate + S-adenosyl-L-methionine = [protein]-L-isoaspartate alpha-methyl ester + S-adenosyl-L-homocysteine. Functionally, catalyzes the methyl esterification of L-isoaspartyl residues in peptides and proteins that result from spontaneous decomposition of normal L-aspartyl and L-asparaginyl residues. It plays a role in the repair and/or degradation of damaged proteins. This chain is Protein-L-isoaspartate O-methyltransferase, found in Methylobacillus flagellatus (strain ATCC 51484 / DSM 6875 / VKM B-1610 / KT).